Here is a 151-residue protein sequence, read N- to C-terminus: MGRMHSRGKGISSSAIPYKRTPPSWVKTAAADVEEMIMKAAKKGQMPSQIGVVLRDQHGIPLVKSVTGSKILRILKAHGLAPEIPEDLYFLIKKAVAIRKHLERNRKDKDSKFRLILVESRIHRLARYYKRTKKLPPTWKYESTTASTLVA.

This sequence belongs to the universal ribosomal protein uS15 family.

This chain is Small ribosomal subunit protein uS15z, found in Oryza sativa subsp. japonica (Rice).